The chain runs to 778 residues: Subtilisin-like protease SBT5.4 (778 aa).

Positions 1–35 (MSMTRRYSSTQYSNKMSLQSLSSLLLLVTLFFSPA) are cleaved as a signal peptide. The 86-residue stretch at 41–126 (SYIVYLGSHA…VFPNKGRKLH (86 aa)) folds into the Inhibitor I9 domain. The 505-residue stretch at 130 to 634 (SWNFMLLAKN…SGHVQPNKAA (505 aa)) folds into the Peptidase S8 domain. The active-site Charge relay system is Asp-163. Asn-218 carries N-linked (GlcNAc...) asparagine glycosylation. The Charge relay system role is filled by His-230. N-linked (GlcNAc...) asparagine glycosylation is found at Asn-253 and Asn-404. A PA domain is found at 401-486 (ANGNVTDALL…KDGETLFSYL (86 aa)). The active-site Charge relay system is Ser-567. N-linked (GlcNAc...) asparagine glycosylation is found at Asn-657, Asn-690, and Asn-732.

Belongs to the peptidase S8 family. In terms of tissue distribution, expressed in the vasculature of roots and leaves, stomata, sepals, stigma, anthers and siliques.

The protein localises to the endoplasmic reticulum. It localises to the cell membrane. Serine protease. Has a substrate preference for the hydrophobic residues Phe and Ala and the basic residue Asp in the P1 position, and for Asp, Leu or Ala in the P1' position. Interferes with CLAVATA 3 (CLV3) signaling, but does not cleave CLV3. The sequence is that of Subtilisin-like protease SBT5.4 from Arabidopsis thaliana (Mouse-ear cress).